The following is a 126-amino-acid chain: Large ribosomal subunit protein bL17 (126 aa).

It belongs to the bacterial ribosomal protein bL17 family. As to quaternary structure, part of the 50S ribosomal subunit. Contacts protein L32.

The chain is Large ribosomal subunit protein bL17 from Xylella fastidiosa (strain M12).